Here is a 287-residue protein sequence, read N- to C-terminus: Inorganic pyrophosphatase (287 aa).

Arg-79 is a binding site for diphosphate. 3 residues coordinate Mg(2+): Asp-116, Asp-121, and Asp-153.

The protein belongs to the PPase family. Mg(2+) is required as a cofactor.

It is found in the cytoplasm. The catalysed reaction is diphosphate + H2O = 2 phosphate + H(+). This chain is Inorganic pyrophosphatase (IPP1), found in Eremothecium gossypii (strain ATCC 10895 / CBS 109.51 / FGSC 9923 / NRRL Y-1056) (Yeast).